A 342-amino-acid chain; its full sequence is S-methyl-5'-thioadenosine phosphorylase (342 aa).

Phosphate contacts are provided by residues Thr-51, 99–100 (RH), and 132–133 (SA). Substrate is bound at residue Met-234. Ser-235 is a binding site for phosphate. 258-260 (DYD) contacts substrate.

This sequence belongs to the PNP/MTAP phosphorylase family. MTAP subfamily. Homotrimer.

Its subcellular location is the cytoplasm. The protein localises to the nucleus. The enzyme catalyses S-methyl-5'-thioadenosine + phosphate = 5-(methylsulfanyl)-alpha-D-ribose 1-phosphate + adenine. It functions in the pathway amino-acid biosynthesis; L-methionine biosynthesis via salvage pathway; S-methyl-5-thio-alpha-D-ribose 1-phosphate from S-methyl-5'-thioadenosine (phosphorylase route): step 1/1. Catalyzes the reversible phosphorylation of S-methyl-5'-thioadenosine (MTA) to adenine and 5-methylthioribose-1-phosphate. Involved in the breakdown of MTA, a major by-product of polyamine biosynthesis. Responsible for the first step in the methionine salvage pathway after MTA has been generated from S-adenosylmethionine. Has broad substrate specificity with 6-aminopurine nucleosides as preferred substrates. This Aspergillus fumigatus (strain ATCC MYA-4609 / CBS 101355 / FGSC A1100 / Af293) (Neosartorya fumigata) protein is S-methyl-5'-thioadenosine phosphorylase.